Consider the following 459-residue polypeptide: Cyclin-dependent kinase F-4 (459 aa).

In terms of domain architecture, Protein kinase spans 4-283 (FKMIKEVGDG…AAEVLQHTFF (280 aa)). Residues 10–18 (VGDGTFGSV) and K33 each bind ATP. D125 functions as the Proton acceptor in the catalytic mechanism. Phosphoserine is present on S151. T156 carries the post-translational modification Phosphothreonine. The segment at 310-397 (KGVSEHGMPR…RHSRSLPETG (88 aa)) is disordered. 2 stretches are compositionally biased toward polar residues: residues 322 to 346 (STGTLSTTKPHSNASLKSSGLSKTG) and 366 to 375 (ESNNKLTTNR).

The protein belongs to the protein kinase superfamily. CMGC Ser/Thr protein kinase family. CDC2/CDKX subfamily.

The enzyme catalyses L-seryl-[protein] + ATP = O-phospho-L-seryl-[protein] + ADP + H(+). It carries out the reaction L-threonyl-[protein] + ATP = O-phospho-L-threonyl-[protein] + ADP + H(+). The catalysed reaction is [DNA-directed RNA polymerase] + ATP = phospho-[DNA-directed RNA polymerase] + ADP + H(+). This chain is Cyclin-dependent kinase F-4 (CDKF-4), found in Oryza sativa subsp. japonica (Rice).